The sequence spans 373 residues: Probable G-protein coupled receptor 173 (373 aa).

Residues 1-26 (MANTTGEPEEVSGALSLPSASAYVKL) lie on the Extracellular side of the membrane. Residue Asn3 is glycosylated (N-linked (GlcNAc...) asparagine). A helical transmembrane segment spans residues 27 to 47 (VLLGLIMCVSLAGNAILSLLV). Topologically, residues 48–59 (LKERALHKAPYY) are cytoplasmic. The chain crosses the membrane as a helical span at residues 60–80 (FLLDLCLADGIRSAICFPFVL). Residues 81 to 97 (ASVRHGSSWTFSALSCK) lie on the Extracellular side of the membrane. The cysteines at positions 96 and 174 are disulfide-linked. The chain crosses the membrane as a helical span at residues 98–118 (IVAFMAVLFCFHAAFMLFCIS). The Cytoplasmic segment spans residues 119–139 (VTRYMAIAHHRFYAKRMTLWT). The helical transmembrane segment at 140–160 (CAAVICMAWTLSVAMAFPPVF) threads the bilayer. The Extracellular segment spans residues 161 to 188 (DVGTYKFIREEDQCIFEHRYFKANDTLG). Asn184 carries N-linked (GlcNAc...) asparagine glycosylation. A helical transmembrane segment spans residues 189 to 209 (FMLMLAVLMAATHAVYGKLLL). Topologically, residues 210–287 (FEYRHRKMKP…VKGEKQLGRM (78 aa)) are cytoplasmic. A helical membrane pass occupies residues 288 to 308 (FYAITLLFLLLWSPYIVACYW). At 309-322 (RVFVKACAVPHRYL) the chain is on the extracellular side. A helical membrane pass occupies residues 323–343 (ATAVWMSFAQAAVNPIVCFLL). Residues 344-373 (NKDLKKCLRTHAPCWGTGGAPAPREPYCVM) are Cytoplasmic-facing.

It belongs to the G-protein coupled receptor 1 family. As to expression, expressed in the ovary, specifically in granulosa cells of follicles that have passed the primary stage and in oocytes (at protein level). Expressed in preadipocytes.

The protein resides in the cell membrane. Its function is as follows. Is a receptor for the SMIM20 derived peptides Phoenixin-14 and Phoenixin-20. It mediates the Phoenixin-14 and Phoenixin-20 augmentation of gonadotropin-releasing hormone (GNRH) signaling in the hypothalamus and pituitary gland. In the ovary, it mediates the effects of Phoenixin-14 and Phoenixin-20 induced granulosa cell proliferation during follicular growth. This Mus musculus (Mouse) protein is Probable G-protein coupled receptor 173 (Gpr173).